The chain runs to 264 residues: Fibroblast growth factor 5 (264 aa).

Positions 1–20 (MSLSLLFLIFCSHLIHSAWA) are cleaved as a signal peptide. The tract at residues 25–81 (RLTPEGQPAPPRNPGDSSGSRGRSSATFSSSSASSPVAASPGSQGSGSEHSSFQWSP) is disordered. Low complexity predominate over residues 38 to 72 (PGDSSGSRGRSSATFSSSSASSPVAASPGSQGSGS). Asn108 carries an N-linked (GlcNAc...) asparagine glycan. The disordered stretch occupies residues 227 to 254 (FTVTVPEKKKPPVKPKVPLSQPRRSPSP).

This sequence belongs to the heparin-binding growth factors family. Interacts with FGFR1 and FGFR2. Affinity between fibroblast growth factors (FGFs) and their receptors is increased by heparan sulfate glycosaminoglycans that function as coreceptors.

It is found in the secreted. Its function is as follows. Plays an important role in the regulation of cell proliferation and cell differentiation. Required for normal regulation of the hair growth cycle. Functions as an inhibitor of hair elongation by promoting progression from anagen, the growth phase of the hair follicle, into catagen the apoptosis-induced regression phase. The polypeptide is Fibroblast growth factor 5 (Fgf5) (Mus musculus (Mouse)).